The chain runs to 312 residues: Acetylglutamate kinase (312 aa).

Substrate contacts are provided by residues 69-70, Arg-91, and Asn-191; that span reads GG.

Belongs to the acetylglutamate kinase family. ArgB subfamily.

It is found in the cytoplasm. The enzyme catalyses N-acetyl-L-glutamate + ATP = N-acetyl-L-glutamyl 5-phosphate + ADP. Its pathway is amino-acid biosynthesis; L-arginine biosynthesis; N(2)-acetyl-L-ornithine from L-glutamate: step 2/4. Catalyzes the ATP-dependent phosphorylation of N-acetyl-L-glutamate. The sequence is that of Acetylglutamate kinase from Streptomyces griseus subsp. griseus (strain JCM 4626 / CBS 651.72 / NBRC 13350 / KCC S-0626 / ISP 5235).